Consider the following 735-residue polypeptide: MKVQEGLFLVAIFFSLACTQLVKGQHQPGENCQNKCGNITIEYPFGISSGCYYPGNESFSITCKEDRPHVLSDIEVANFNHSGQLQVLLNRSSTCYDEQGKKTEEDSSFTLENLSLSANNKLTAVGCNALSLLDTFGMQNYSTACLSLCDSPPEADGECNGRGCCRVDVSAPLDSYTFETTSGRIKHMTSFHDFSPCTYAFLVEDDKFNFSSTEDLLNLRNVMRFPVLLDWSVGNQTCEQVGSTSICGGNSTCLDSTPRNGYICRCNEGFDGNPYLSAGCQDVNECTTSSTIHRHNCSDPKTCRNKVGGFYCKCQSGYRLDTTTMSCKRKEFAWTTILLVTTIGFLVILLGVACIQQRMKHLKDTKLREQFFEQNGGGMLTQRLSGAGPSNVDVKIFTEDGMKKATNGYAESRILGQGGQGTVYKGILPDNSIVAIKKARLGDSSQVEQFINEVLVLSQINHRNVVKLLGCCLETEVPLLVYEFITNGTLFDHLHGSMIDSSLTWEHRLKIAIEVAGTLAYLHSSASIPIIHRDIKTANILLDVNLTAKVADFGASRLIPMDKEELETMVQGTLGYLDPEYYNTGLLNEKSDVYSFGVVLMELLSGQKALCFKRPQSSKHLVSYFATATKENRLDEIIGGEVMNEDNLKEIQEAARIAAECTRLMGEERPRMKEVAAKLEALRVEKTKHKWSDQYPEENEHLIGGHILSAQGETSSSIGYDSIKNVAILDIETGR.

The first 24 residues, 1–24 (MKVQEGLFLVAIFFSLACTQLVKG), serve as a signal peptide directing secretion. Residues 25–331 (QHQPGENCQN…TTTMSCKRKE (307 aa)) are Extracellular-facing. 9 N-linked (GlcNAc...) asparagine glycosylation sites follow: asparagine 38, asparagine 56, asparagine 80, asparagine 90, asparagine 113, asparagine 140, asparagine 209, asparagine 235, and asparagine 250. Residues 67 to 254 (RPHVLSDIEV…SICGGNSTCL (188 aa)) are polygalacturonic acid-binding. An EGF-like 1 domain is found at 234 to 281 (GNQTCEQVGSTSICGGNSTCLDSTPRNGYICRCNEGFDGNPYLSAGCQ). Disulfide bonds link cysteine 238–cysteine 253, cysteine 247–cysteine 264, cysteine 266–cysteine 280, cysteine 286–cysteine 303, cysteine 297–cysteine 312, and cysteine 314–cysteine 327. The EGF-like 2; calcium-binding domain occupies 282–328 (DVNECTTSSTIHRHNCSDPKTCRNKVGGFYCKCQSGYRLDTTTMSCK). Asparagine 296 carries an N-linked (GlcNAc...) asparagine glycan. A helical transmembrane segment spans residues 332-352 (FAWTTILLVTTIGFLVILLGV). Topologically, residues 353–735 (ACIQQRMKHL…VAILDIETGR (383 aa)) are cytoplasmic. Position 398 is a phosphothreonine (threonine 398). The 284-residue stretch at 409–692 (YAESRILGQG…RVEKTKHKWS (284 aa)) folds into the Protein kinase domain. ATP is bound by residues 415–423 (LGQGGQGTV) and lysine 437. Position 482 is a phosphotyrosine (tyrosine 482). Aspartate 534 acts as the Proton acceptor in catalysis. Phosphothreonine occurs at positions 568 and 573. Tyrosine 581 carries the phosphotyrosine modification.

It belongs to the protein kinase superfamily. Ser/Thr protein kinase family. In terms of assembly, interacts with the glycine-rich proteins GRP3 and GRP3S, and the type 2C protein phosphatase KAPP. Component of a 500 kDa complex, composed of WAK1, GRP3 and KAPP. Interacts with the oxygen-evolving enhancer protein 2 (OEE2). As to expression, predominantly expressed in green tissues such as stems and leaves. Detected at organ junctions.

The protein resides in the membrane. The enzyme catalyses L-seryl-[protein] + ATP = O-phospho-L-seryl-[protein] + ADP + H(+). The catalysed reaction is L-threonyl-[protein] + ATP = O-phospho-L-threonyl-[protein] + ADP + H(+). Serine/threonine-protein kinase that may function as a signaling receptor of extracellular matrix component. Binding to pectin may have significance in the control of cell expansion, morphogenesis and development. Required during plant's response to pathogen infection and in plant defense against heavy metal toxicity. Phosphorylates the oxygen-evolving enhancer protein 2 (OEE2) in an GRP-3-dependent manner. The sequence is that of Wall-associated receptor kinase 1 (WAK1) from Arabidopsis thaliana (Mouse-ear cress).